A 78-amino-acid polypeptide reads, in one-letter code: MSRVCQVTGKRPVSGNNRSHAMNATKRRFLPNLHSHRFWVEGEKRFVTLRVSAKGMRVIDKKGIETVLAEIRARGEKY.

Positions Met1 to Ala21 are disordered.

It belongs to the bacterial ribosomal protein bL28 family.

The polypeptide is Large ribosomal subunit protein bL28 (Yersinia enterocolitica serotype O:8 / biotype 1B (strain NCTC 13174 / 8081)).